We begin with the raw amino-acid sequence, 198 residues long: Glycerol-3-phosphate acyltransferase (198 aa).

A run of 3 helical transmembrane segments spans residues 5–25 (AVIL…GYLI), 114–134 (VLIM…IAVL), and 154–176 (AFAL…LVAV).

The protein belongs to the PlsY family. In terms of assembly, probably interacts with PlsX.

The protein localises to the cell membrane. It catalyses the reaction an acyl phosphate + sn-glycerol 3-phosphate = a 1-acyl-sn-glycero-3-phosphate + phosphate. It functions in the pathway lipid metabolism; phospholipid metabolism. Functionally, catalyzes the transfer of an acyl group from acyl-phosphate (acyl-PO(4)) to glycerol-3-phosphate (G3P) to form lysophosphatidic acid (LPA). This enzyme utilizes acyl-phosphate as fatty acyl donor, but not acyl-CoA or acyl-ACP. The chain is Glycerol-3-phosphate acyltransferase from Desulforudis audaxviator (strain MP104C).